A 269-amino-acid polypeptide reads, in one-letter code: 4-hydroxy-tetrahydrodipicolinate reductase (269 aa).

NAD(+) is bound by residues Gly-8–Met-13 and Glu-34. Arg-35 lines the NADP(+) pocket. NAD(+)-binding positions include Gly-98–Thr-100 and Ala-122–Tyr-125. The active-site Proton donor/acceptor is the His-155. (S)-2,3,4,5-tetrahydrodipicolinate is bound at residue His-156. The active-site Proton donor is Lys-159. (S)-2,3,4,5-tetrahydrodipicolinate is bound at residue Gly-165–Thr-166.

It belongs to the DapB family.

It localises to the cytoplasm. It catalyses the reaction (S)-2,3,4,5-tetrahydrodipicolinate + NAD(+) + H2O = (2S,4S)-4-hydroxy-2,3,4,5-tetrahydrodipicolinate + NADH + H(+). The enzyme catalyses (S)-2,3,4,5-tetrahydrodipicolinate + NADP(+) + H2O = (2S,4S)-4-hydroxy-2,3,4,5-tetrahydrodipicolinate + NADPH + H(+). It participates in amino-acid biosynthesis; L-lysine biosynthesis via DAP pathway; (S)-tetrahydrodipicolinate from L-aspartate: step 4/4. Its function is as follows. Catalyzes the conversion of 4-hydroxy-tetrahydrodipicolinate (HTPA) to tetrahydrodipicolinate. The chain is 4-hydroxy-tetrahydrodipicolinate reductase from Vibrio vulnificus (strain YJ016).